The primary structure comprises 147 residues: Endoribonuclease YbeY (147 aa).

Zn(2+) is bound by residues His-111, His-115, and Asp-121.

The protein belongs to the endoribonuclease YbeY family. Zn(2+) serves as cofactor.

Its subcellular location is the cytoplasm. In terms of biological role, single strand-specific metallo-endoribonuclease involved in late-stage 70S ribosome quality control and in maturation of the 3' terminus of the 16S rRNA. This is Endoribonuclease YbeY from Amoebophilus asiaticus (strain 5a2).